We begin with the raw amino-acid sequence, 192 residues long: Transcriptional activator GvpE (192 aa).

DNA is bound at residue 140–145; that stretch reads KRKVYR. The tract at residues 150-181 is leucine-zipper; sequence EATFDTVEPAVNRLVTFSLVLKALMIDCNARY.

In terms of assembly, interacts with GvpD, also with c-GvpD from H.salinarum.

It localises to the cytoplasm. With respect to regulation, the amount of protein that accumulates is controlled by GvpD; GvpD causes a reduction in the amount of GvpE, preventing accumulation of excessive amounts of gas vesicles. In terms of biological role, plays a regulatory role in gas vesicle synthesis, activates transcription of the gvpA operon, and probably of the gvpD operon. Gas vesicles are hollow, gas filled proteinaceous nanostructures found in some microorganisms. They allow positioning of halobacteria at the optimal depth for growth in the poorly aerated, shallow brine pools of their habitat. Its function is as follows. Expression of a 9.5 kb mc-vac DNA fragment containing 2 divergently transcribed regions (gvpD-gvpE-gvpF-gvpG-gvpH-gvpI-gvpJ-gvpK-gvpL-gvpM and gvpA-gvpC-gvpN-gvpO) allows H.volcanii to produce gas vesicles. This is Transcriptional activator GvpE from Haloferax mediterranei (strain ATCC 33500 / DSM 1411 / JCM 8866 / NBRC 14739 / NCIMB 2177 / R-4) (Halobacterium mediterranei).